Here is a 215-residue protein sequence, read N- to C-terminus: MMQEIKAFNEKRAEIYWWLSSLFAKELTQEELDKYQSMEIRAFLTGLAENDALRPSVNAFVDALNRLVDRQDAQLELAADFCDLFLKTAKHGALPYASIYLTKDGLLNGEPAQKMDAWLKKHGVQVNQQLNEPADHLAIMLDFLGNLIIRSNEFEQDRHMEEAFIEQNAFIQEMLLSWLPSFSQRAAEYDEFGFYNSAIKLLVAFCMLDSDYLVG.

This sequence belongs to the TorD/DmsD family. TorD subfamily.

The protein localises to the cytoplasm. Functionally, involved in the biogenesis of TorA. Acts on TorA before the insertion of the molybdenum cofactor and, as a result, probably favors a conformation of the apoenzyme that is competent for acquiring the cofactor. This is Chaperone protein TorD from Vibrio vulnificus (strain CMCP6).